A 115-amino-acid polypeptide reads, in one-letter code: Parathyroid hormone (115 aa).

Positions 1–25 (MMSASTMAKVMILMLAVCLLTQADG) are cleaved as a signal peptide. A propeptide spanning residues 26–31 (KPVKKR) is cleaved from the precursor. The important for receptor binding stretch occupies residues 51-69 (RMQWLRKKLQDVHNFVSLG). Residues 76–101 (EGSYQRPTKKEENVLVDGNSKSLGEG) are disordered.

Belongs to the parathyroid hormone family. As to quaternary structure, interacts with PTH1R (via N-terminal extracellular domain). In terms of tissue distribution, hypothalamus and parathyroid gland.

The protein resides in the secreted. Functionally, parathyroid hormone elevates calcium level by dissolving the salts in bone and preventing their renal excretion. Acts by binding to its receptor, PTH1R, activating G protein-coupled receptor signaling. Stimulates [1-14C]-2-deoxy-D-glucose (2DG) transport and glycogen synthesis in osteoblastic cells. The protein is Parathyroid hormone (Pth) of Rattus norvegicus (Rat).